The sequence spans 160 residues: Large ribosomal subunit protein bL17 (160 aa).

Residues 123–141 (DEKRQKRAEARAKRREEMQ) show a composition bias toward basic and acidic residues. A disordered region spans residues 123-160 (DEKRQKRAEARAKRREEMQKAMAEQQQAEGGEPEGGNE). Residues 142–152 (KAMAEQQQAEG) are compositionally biased toward low complexity.

This sequence belongs to the bacterial ribosomal protein bL17 family. In terms of assembly, part of the 50S ribosomal subunit. Contacts protein L32.

The protein is Large ribosomal subunit protein bL17 of Acidobacterium capsulatum (strain ATCC 51196 / DSM 11244 / BCRC 80197 / JCM 7670 / NBRC 15755 / NCIMB 13165 / 161).